Here is a 212-residue protein sequence, read N- to C-terminus: HTH-type transcriptional regulator RutR (212 aa).

Residues 17 to 77 (SAKKKAILSA…AVLRQILDIW (61 aa)) enclose the HTH tetR-type domain. Residues 39–58 (TRLEQIAELAGVSKTNLLYY) constitute a DNA-binding region (H-T-H motif).

Homodimer.

Functionally, master transcription regulator which represses the degradation of pyrimidines (rutABCDEFG) and purines (gcl operon) for maintenance of metabolic balance between pyrimidines and purines. It also regulates the synthesis of pyrimidine nucleotides and arginine from glutamine (carAB) and the supply of glutamate (gadABWX). The polypeptide is HTH-type transcriptional regulator RutR (rutR) (Escherichia coli O157:H7).